We begin with the raw amino-acid sequence, 177 residues long: ATP synthase subunit b (177 aa).

Residues 16-36 (HLLLANMIVTIVVFLLLLILL) form a helical membrane-spanning segment.

This sequence belongs to the ATPase B chain family. F-type ATPases have 2 components, F(1) - the catalytic core - and F(0) - the membrane proton channel. F(1) has five subunits: alpha(3), beta(3), gamma(1), delta(1), epsilon(1). F(0) has three main subunits: a(1), b(2) and c(10-14). The alpha and beta chains form an alternating ring which encloses part of the gamma chain. F(1) is attached to F(0) by a central stalk formed by the gamma and epsilon chains, while a peripheral stalk is formed by the delta and b chains.

Its subcellular location is the cell membrane. In terms of biological role, f(1)F(0) ATP synthase produces ATP from ADP in the presence of a proton or sodium gradient. F-type ATPases consist of two structural domains, F(1) containing the extramembraneous catalytic core and F(0) containing the membrane proton channel, linked together by a central stalk and a peripheral stalk. During catalysis, ATP synthesis in the catalytic domain of F(1) is coupled via a rotary mechanism of the central stalk subunits to proton translocation. Functionally, component of the F(0) channel, it forms part of the peripheral stalk, linking F(1) to F(0). In Exiguobacterium sibiricum (strain DSM 17290 / CCUG 55495 / CIP 109462 / JCM 13490 / 255-15), this protein is ATP synthase subunit b.